The primary structure comprises 165 residues: Phosphopantetheine adenylyltransferase (165 aa).

Thr9 is a substrate binding site. ATP-binding positions include 9–10 (TF) and His17. Substrate contacts are provided by Lys41, Leu73, and Arg87. ATP is bound by residues 88-90 (GLR), Glu98, and 123-129 (YQFISGT).

It belongs to the bacterial CoaD family. Homohexamer. The cofactor is Mg(2+).

It localises to the cytoplasm. The enzyme catalyses (R)-4'-phosphopantetheine + ATP + H(+) = 3'-dephospho-CoA + diphosphate. It functions in the pathway cofactor biosynthesis; coenzyme A biosynthesis; CoA from (R)-pantothenate: step 4/5. Reversibly transfers an adenylyl group from ATP to 4'-phosphopantetheine, yielding dephospho-CoA (dPCoA) and pyrophosphate. The chain is Phosphopantetheine adenylyltransferase from Burkholderia vietnamiensis (strain G4 / LMG 22486) (Burkholderia cepacia (strain R1808)).